The following is a 360-amino-acid chain: UDP-N-acetylglucosamine--N-acetylmuramyl-(pentapeptide) pyrophosphoryl-undecaprenol N-acetylglucosamine transferase (360 aa).

Residues 11 to 13 (TGG), N120, R161, S188, and Q282 each bind UDP-N-acetyl-alpha-D-glucosamine.

Belongs to the glycosyltransferase 28 family. MurG subfamily.

It is found in the cell inner membrane. It carries out the reaction di-trans,octa-cis-undecaprenyl diphospho-N-acetyl-alpha-D-muramoyl-L-alanyl-D-glutamyl-meso-2,6-diaminopimeloyl-D-alanyl-D-alanine + UDP-N-acetyl-alpha-D-glucosamine = di-trans,octa-cis-undecaprenyl diphospho-[N-acetyl-alpha-D-glucosaminyl-(1-&gt;4)]-N-acetyl-alpha-D-muramoyl-L-alanyl-D-glutamyl-meso-2,6-diaminopimeloyl-D-alanyl-D-alanine + UDP + H(+). The protein operates within cell wall biogenesis; peptidoglycan biosynthesis. Functionally, cell wall formation. Catalyzes the transfer of a GlcNAc subunit on undecaprenyl-pyrophosphoryl-MurNAc-pentapeptide (lipid intermediate I) to form undecaprenyl-pyrophosphoryl-MurNAc-(pentapeptide)GlcNAc (lipid intermediate II). This chain is UDP-N-acetylglucosamine--N-acetylmuramyl-(pentapeptide) pyrophosphoryl-undecaprenol N-acetylglucosamine transferase, found in Synechococcus sp. (strain RCC307).